We begin with the raw amino-acid sequence, 860 residues long: Leucine--tRNA ligase (860 aa).

The 'HIGH' region signature appears at 42-52 (PYPSGRLHMGH). The short motif at 619-623 (KMSKS) is the 'KMSKS' region element. Residue lysine 622 participates in ATP binding.

Belongs to the class-I aminoacyl-tRNA synthetase family.

Its subcellular location is the cytoplasm. The catalysed reaction is tRNA(Leu) + L-leucine + ATP = L-leucyl-tRNA(Leu) + AMP + diphosphate. The protein is Leucine--tRNA ligase of Escherichia coli O45:K1 (strain S88 / ExPEC).